A 287-amino-acid chain; its full sequence is Glutamate racemase (287 aa).

Residues 32 to 33 (DS) and 64 to 65 (YG) each bind substrate. The Proton donor/acceptor role is filled by Cys96. 97–98 (NT) lines the substrate pocket. Cys208 acts as the Proton donor/acceptor in catalysis. A substrate-binding site is contributed by 209 to 210 (TH).

It belongs to the aspartate/glutamate racemases family.

It catalyses the reaction L-glutamate = D-glutamate. Its pathway is cell wall biogenesis; peptidoglycan biosynthesis. Functionally, provides the (R)-glutamate required for cell wall biosynthesis. The chain is Glutamate racemase from Yersinia enterocolitica serotype O:8 / biotype 1B (strain NCTC 13174 / 8081).